The chain runs to 462 residues: Probable acid phosphatase SPBC4.06 (462 aa).

Residue His-35 is the Nucleophile of the active site. The Proton donor role is filled by Asp-330.

The protein belongs to the histidine acid phosphatase family.

Its subcellular location is the mitochondrion. It carries out the reaction a phosphate monoester + H2O = an alcohol + phosphate. This Schizosaccharomyces pombe (strain 972 / ATCC 24843) (Fission yeast) protein is Probable acid phosphatase SPBC4.06.